The chain runs to 117 residues: UPF0102 protein FTN_0424 (117 aa).

It belongs to the UPF0102 family.

The chain is UPF0102 protein FTN_0424 from Francisella tularensis subsp. novicida (strain U112).